Here is a 169-residue protein sequence, read N- to C-terminus: Non-specific lipid transfer protein GPI-anchored 11 (169 aa).

The N-terminal stretch at 1–23 (MAYATILMIFSVVALMSGERAHA) is a signal peptide. 4 cysteine pairs are disulfide-bonded: Cys27-Cys70, Cys37-Cys54, Cys55-Cys95, and Cys68-Cys105. The GPI-anchor amidated serine moiety is linked to residue Ser146. A propeptide spans 147–169 (SDASLLSVSFAFVIFMALISSFY) (removed in mature form).

The protein belongs to the plant LTP family. In terms of tissue distribution, expressed in a vascular-specific manner, mainly in roots, and, to a lower extent, in hypocotyls, seedlings stems and flowers.

It localises to the cell membrane. Its subcellular location is the secreted. Its function is as follows. Probable lipid transfer protein. Proteoglycan-like factor that exhibits xylogen activity consisting in mediating local and inductive cell-cell interactions required for xylem differentiation. This Arabidopsis thaliana (Mouse-ear cress) protein is Non-specific lipid transfer protein GPI-anchored 11.